Reading from the N-terminus, the 191-residue chain is Cdc42 homolog (191 aa).

10 to 17 (GDGAVGKT) is a GTP binding site. An Effector region motif is present at residues 32 to 40 (YVPTVFDNY). Residues 57–61 (DTAGQ) and 115–118 (TQID) each bind GTP. Residue Cys-188 is modified to Cysteine methyl ester. Residue Cys-188 is the site of S-geranylgeranyl cysteine attachment. Residues 189 to 191 (KFL) constitute a propeptide, removed in mature form.

It belongs to the small GTPase superfamily. Rho family. CDC42 subfamily.

Its subcellular location is the cell junction. The protein localises to the adherens junction. The protein resides in the cell membrane. The enzyme catalyses GTP + H2O = GDP + phosphate + H(+). Its function is as follows. Regulates mbt kinase activity and is also required to recruit mbt to adherens junctions. Together with mbt, regulates photoreceptor cell morphogenesis. The sequence is that of Cdc42 homolog from Drosophila pseudoobscura pseudoobscura (Fruit fly).